A 469-amino-acid polypeptide reads, in one-letter code: ATP synthase subunit beta (469 aa).

Residue 155-162 (GGAGCGKT) participates in ATP binding.

The protein belongs to the ATPase alpha/beta chains family. F-type ATPases have 2 components, CF(1) - the catalytic core - and CF(0) - the membrane proton channel. CF(1) has five subunits: alpha(3), beta(3), gamma(1), delta(1), epsilon(1). CF(0) has three main subunits: a(1), b(2) and c(9-12). The alpha and beta chains form an alternating ring which encloses part of the gamma chain. CF(1) is attached to CF(0) by a central stalk formed by the gamma and epsilon chains, while a peripheral stalk is formed by the delta and b chains.

The protein localises to the cell inner membrane. The catalysed reaction is ATP + H2O + 4 H(+)(in) = ADP + phosphate + 5 H(+)(out). Its function is as follows. Produces ATP from ADP in the presence of a proton gradient across the membrane. The catalytic sites are hosted primarily by the beta subunits. This is ATP synthase subunit beta from Syntrophus aciditrophicus (strain SB).